Here is a 1381-residue protein sequence, read N- to C-terminus: Major capsid protein (1381 aa).

It belongs to the herpesviridae major capsid protein family. As to quaternary structure, homomultimer. Makes the hexons and eleven out of twelve pentons. Interacts with triplex proteins 1/TRX1 and 2/TRX2; adjacent capsomers are linked together in groups of three by triplexes, heterotrimeric complexes composed of one molecule of TRX1 and two molecules of TRX2. Interacts with scaffold protein; this interaction allows efficient MCP transport to the host nucleus. Interacts with capsid vertex component 2/CVC2. Interacts with the small capsomere-interacting protein/SCP.

It is found in the virion. It localises to the host nucleus. Self-assembles to form an icosahedral capsid with a T=16 symmetry, about 200 nm in diameter, and consisting of 150 hexons and 12 pentons (total of 162 capsomers). Hexons form the edges and faces of the capsid and are each composed of six MCP molecules. In contrast, one penton is found at each of the 12 vertices. Eleven of the pentons are MCP pentamers, while the last vertex is occupied by the portal complex. The capsid is surrounded by a layer of proteinaceous material designated the tegument which, in turn, is enclosed in an envelope of host cell-derived lipids containing virus-encoded glycoproteins. The protein is Major capsid protein of Epstein-Barr virus (strain AG876) (HHV-4).